Consider the following 314-residue polypeptide: tRNA pseudouridine synthase B (314 aa).

A substrate-binding site is contributed by His-43. Asp-48 functions as the Nucleophile in the catalytic mechanism. Substrate-binding residues include Tyr-76, Tyr-179, and Leu-200.

The protein belongs to the pseudouridine synthase TruB family. Type 1 subfamily.

The enzyme catalyses uridine(55) in tRNA = pseudouridine(55) in tRNA. Its function is as follows. Responsible for synthesis of pseudouridine from uracil-55 in the psi GC loop of transfer RNAs. This is tRNA pseudouridine synthase B from Salmonella paratyphi B (strain ATCC BAA-1250 / SPB7).